The chain runs to 357 residues: N-acetyl-gamma-glutamyl-phosphate reductase (357 aa).

Cysteine 151 is a catalytic residue.

It belongs to the NAGSA dehydrogenase family. Type 1 subfamily.

It is found in the cytoplasm. The enzyme catalyses N-acetyl-L-glutamate 5-semialdehyde + phosphate + NADP(+) = N-acetyl-L-glutamyl 5-phosphate + NADPH + H(+). The protein operates within amino-acid biosynthesis; L-arginine biosynthesis; N(2)-acetyl-L-ornithine from L-glutamate: step 3/4. Catalyzes the NADPH-dependent reduction of N-acetyl-5-glutamyl phosphate to yield N-acetyl-L-glutamate 5-semialdehyde. This chain is N-acetyl-gamma-glutamyl-phosphate reductase, found in Corynebacterium kroppenstedtii (strain DSM 44385 / JCM 11950 / CIP 105744 / CCUG 35717).